We begin with the raw amino-acid sequence, 165 residues long: Cyclic pyranopterin monophosphate synthase (165 aa).

Residues 83 to 85 (FCH) and 120 to 121 (ME) each bind substrate. Residue Asp-135 is part of the active site.

It belongs to the MoaC family. As to quaternary structure, homohexamer; trimer of dimers.

It catalyses the reaction (8S)-3',8-cyclo-7,8-dihydroguanosine 5'-triphosphate = cyclic pyranopterin phosphate + diphosphate. It functions in the pathway cofactor biosynthesis; molybdopterin biosynthesis. In terms of biological role, catalyzes the conversion of (8S)-3',8-cyclo-7,8-dihydroguanosine 5'-triphosphate to cyclic pyranopterin monophosphate (cPMP). The protein is Cyclic pyranopterin monophosphate synthase of Xanthomonas oryzae pv. oryzae (strain MAFF 311018).